The primary structure comprises 295 residues: Pyridoxal 5'-phosphate synthase subunit PdxS (295 aa).

Asp25 provides a ligand contact to D-ribose 5-phosphate. Catalysis depends on Lys82, which acts as the Schiff-base intermediate with D-ribose 5-phosphate. Gly154 is a D-ribose 5-phosphate binding site. Arg166 contacts D-glyceraldehyde 3-phosphate. D-ribose 5-phosphate contacts are provided by residues Gly215 and 236–237 (GS).

Belongs to the PdxS/SNZ family. In the presence of PdxT, forms a dodecamer of heterodimers.

The enzyme catalyses aldehydo-D-ribose 5-phosphate + D-glyceraldehyde 3-phosphate + L-glutamine = pyridoxal 5'-phosphate + L-glutamate + phosphate + 3 H2O + H(+). It functions in the pathway cofactor biosynthesis; pyridoxal 5'-phosphate biosynthesis. Functionally, catalyzes the formation of pyridoxal 5'-phosphate from ribose 5-phosphate (RBP), glyceraldehyde 3-phosphate (G3P) and ammonia. The ammonia is provided by the PdxT subunit. Can also use ribulose 5-phosphate and dihydroxyacetone phosphate as substrates, resulting from enzyme-catalyzed isomerization of RBP and G3P, respectively. In Bacillus cereus (strain B4264), this protein is Pyridoxal 5'-phosphate synthase subunit PdxS.